The primary structure comprises 166 residues: Small ribosomal subunit protein uS5 (166 aa).

Residues Leu-11–Val-74 enclose the S5 DRBM domain.

It belongs to the universal ribosomal protein uS5 family. In terms of assembly, part of the 30S ribosomal subunit. Contacts proteins S4 and S8.

Its function is as follows. With S4 and S12 plays an important role in translational accuracy. Functionally, located at the back of the 30S subunit body where it stabilizes the conformation of the head with respect to the body. The sequence is that of Small ribosomal subunit protein uS5 from Idiomarina loihiensis (strain ATCC BAA-735 / DSM 15497 / L2-TR).